Consider the following 354-residue polypeptide: Thiamine thiazole synthase 1, chloroplastic (354 aa).

The N-terminal 43 residues, 1–43, are a transit peptide targeting the chloroplast; sequence MATTAASSLLKSSFAGSRLPSATRAPSSVVVSTGGAPRTAAIS. Substrate is bound by residues Ala-96, 116–117, Gly-124, and Val-190; that span reads EQ. At Cys-219 the chain carries 2,3-didehydroalanine (Cys). Residues Asp-221, His-236, Met-288, and 298–300 each bind substrate; that span reads RMG.

Belongs to the THI4 family. Homooctamer. Fe cation serves as cofactor. During the catalytic reaction, a sulfide is transferred from Cys-219 to a reaction intermediate, generating a dehydroalanine residue.

It is found in the plastid. The protein localises to the chloroplast. The enzyme catalyses [ADP-thiazole synthase]-L-cysteine + glycine + NAD(+) = [ADP-thiazole synthase]-dehydroalanine + ADP-5-ethyl-4-methylthiazole-2-carboxylate + nicotinamide + 3 H2O + 2 H(+). Functionally, involved in biosynthesis of the thiamine precursor thiazole. Catalyzes the conversion of NAD and glycine to adenosine diphosphate 5-(2-hydroxyethyl)-4-methylthiazole-2-carboxylic acid (ADT), an adenylated thiazole intermediate. The reaction includes an iron-dependent sulfide transfer from a conserved cysteine residue of the protein to a thiazole intermediate. The enzyme can only undergo a single turnover, which suggests it is a suicide enzyme. May have additional roles in adaptation to various stress conditions and in DNA damage tolerance. This Sorghum bicolor (Sorghum) protein is Thiamine thiazole synthase 1, chloroplastic.